A 279-amino-acid chain; its full sequence is Large ribosomal subunit protein uL2 (279 aa).

Positions 202–279 (NASIGKAGRS…TSRHKSKKKG (78 aa)) are disordered. Residues 209-220 (GRSRWLGRRPHN) are compositionally biased toward basic residues.

It belongs to the universal ribosomal protein uL2 family. As to quaternary structure, part of the 50S ribosomal subunit. Forms a bridge to the 30S subunit in the 70S ribosome.

In terms of biological role, one of the primary rRNA binding proteins. Required for association of the 30S and 50S subunits to form the 70S ribosome, for tRNA binding and peptide bond formation. It has been suggested to have peptidyltransferase activity; this is somewhat controversial. Makes several contacts with the 16S rRNA in the 70S ribosome. The chain is Large ribosomal subunit protein uL2 from Methylocella silvestris (strain DSM 15510 / CIP 108128 / LMG 27833 / NCIMB 13906 / BL2).